Consider the following 245-residue polypeptide: 8-amino-3,8-dideoxy-manno-octulosonate cytidylyltransferase (245 aa).

It belongs to the KdsB family.

Its subcellular location is the cytoplasm. It catalyses the reaction 8-amino-3,8-dideoxy-alpha-D-manno-octulosonate + CTP = CMP-8-amino-3,8-dideoxy-alpha-D-manno-oct-2-ulosonate + diphosphate. It participates in bacterial outer membrane biogenesis; lipopolysaccharide biosynthesis. Activates KDO8N (a required 8-carbon sugar) for incorporation into bacterial lipopolysaccharide in the Shewanella genus. The protein is 8-amino-3,8-dideoxy-manno-octulosonate cytidylyltransferase of Shewanella loihica (strain ATCC BAA-1088 / PV-4).